Consider the following 211-residue polypeptide: Small ribosomal subunit protein uS3 (211 aa).

A KH type-2 domain is found at 38-106 (LRKFIKKAFY…NIELNIIEVK (69 aa)).

It belongs to the universal ribosomal protein uS3 family. In terms of assembly, part of the 30S ribosomal subunit. Forms a tight complex with proteins S10 and S14.

In terms of biological role, binds the lower part of the 30S subunit head. Binds mRNA in the 70S ribosome, positioning it for translation. The chain is Small ribosomal subunit protein uS3 from Ehrlichia ruminantium (strain Gardel).